The chain runs to 385 residues: Chaperone protein DnaJ (385 aa).

The J domain maps to 5–70 (DYYEVLGVSK…DKKAAYDRFG (66 aa)). A CR-type zinc finger spans residues 143–221 (GLSKQITVPS…CGGAGRQEKD (79 aa)). Zn(2+) is bound by residues Cys-156, Cys-159, Cys-173, Cys-176, Cys-195, Cys-198, Cys-209, and Cys-212. CXXCXGXG motif repeat units lie at residues 156 to 163 (CSSCDGTG), 173 to 180 (CPTCSGMG), 195 to 202 (CPTCNGMG), and 209 to 216 (CRTCGGAG). The interval 299 to 323 (GGRSRVRVPEGSQSGRQMRLRGKGM) is disordered.

Belongs to the DnaJ family. As to quaternary structure, homodimer. Requires Zn(2+) as cofactor.

The protein resides in the cytoplasm. Participates actively in the response to hyperosmotic and heat shock by preventing the aggregation of stress-denatured proteins and by disaggregating proteins, also in an autonomous, DnaK-independent fashion. Unfolded proteins bind initially to DnaJ; upon interaction with the DnaJ-bound protein, DnaK hydrolyzes its bound ATP, resulting in the formation of a stable complex. GrpE releases ADP from DnaK; ATP binding to DnaK triggers the release of the substrate protein, thus completing the reaction cycle. Several rounds of ATP-dependent interactions between DnaJ, DnaK and GrpE are required for fully efficient folding. Also involved, together with DnaK and GrpE, in the DNA replication of plasmids through activation of initiation proteins. The chain is Chaperone protein DnaJ from Jannaschia sp. (strain CCS1).